Reading from the N-terminus, the 341-residue chain is Glyceraldehyde-3-phosphate dehydrogenase 2 (341 aa).

Residues 12 to 13 (RI), Arg78, and Thr120 each bind NAD(+). Residues 152 to 154 (SCT) and Thr183 each bind D-glyceraldehyde 3-phosphate. Cys153 acts as the Nucleophile in catalysis. Position 184 (Asn184) interacts with NAD(+). D-glyceraldehyde 3-phosphate contacts are provided by residues Arg198, 211-212 (TG), and Arg234. Asn313 provides a ligand contact to NAD(+).

The protein belongs to the glyceraldehyde-3-phosphate dehydrogenase family. In terms of assembly, homotetramer.

Its subcellular location is the cytoplasm. The catalysed reaction is D-glyceraldehyde 3-phosphate + phosphate + NAD(+) = (2R)-3-phospho-glyceroyl phosphate + NADH + H(+). It functions in the pathway carbohydrate degradation; glycolysis; pyruvate from D-glyceraldehyde 3-phosphate: step 1/5. Its function is as follows. Catalyzes the oxidative phosphorylation of glyceraldehyde 3-phosphate (G3P) to 1,3-bisphosphoglycerate (BPG) using the cofactor NAD. The first reaction step involves the formation of a hemiacetal intermediate between G3P and a cysteine residue, and this hemiacetal intermediate is then oxidized to a thioester, with concomitant reduction of NAD to NADH. The reduced NADH is then exchanged with the second NAD, and the thioester is attacked by a nucleophilic inorganic phosphate to produce BPG. The sequence is that of Glyceraldehyde-3-phosphate dehydrogenase 2 (gapA2) from Staphylococcus aureus (strain MRSA252).